The sequence spans 224 residues: uncharacterized protein (224 aa).

This is an uncharacterized protein from Bacillus anthracis.